The following is a 177-amino-acid chain: Peptidyl-tRNA hydrolase (177 aa).

Tyrosine 14 contributes to the tRNA binding site. Histidine 19 (proton acceptor) is an active-site residue. TRNA is bound by residues phenylalanine 64, asparagine 66, and asparagine 112.

The protein belongs to the PTH family. As to quaternary structure, monomer.

Its subcellular location is the cytoplasm. It carries out the reaction an N-acyl-L-alpha-aminoacyl-tRNA + H2O = an N-acyl-L-amino acid + a tRNA + H(+). Hydrolyzes ribosome-free peptidyl-tRNAs (with 1 or more amino acids incorporated), which drop off the ribosome during protein synthesis, or as a result of ribosome stalling. In terms of biological role, catalyzes the release of premature peptidyl moieties from peptidyl-tRNA molecules trapped in stalled 50S ribosomal subunits, and thus maintains levels of free tRNAs and 50S ribosomes. In Latilactobacillus sakei (Lactobacillus sakei), this protein is Peptidyl-tRNA hydrolase.